The sequence spans 481 residues: Aspartyl/glutamyl-tRNA(Asn/Gln) amidotransferase subunit B (481 aa).

Belongs to the GatB/GatE family. GatB subfamily. In terms of assembly, heterotrimer of A, B and C subunits.

The catalysed reaction is L-glutamyl-tRNA(Gln) + L-glutamine + ATP + H2O = L-glutaminyl-tRNA(Gln) + L-glutamate + ADP + phosphate + H(+). It carries out the reaction L-aspartyl-tRNA(Asn) + L-glutamine + ATP + H2O = L-asparaginyl-tRNA(Asn) + L-glutamate + ADP + phosphate + 2 H(+). Functionally, allows the formation of correctly charged Asn-tRNA(Asn) or Gln-tRNA(Gln) through the transamidation of misacylated Asp-tRNA(Asn) or Glu-tRNA(Gln) in organisms which lack either or both of asparaginyl-tRNA or glutaminyl-tRNA synthetases. The reaction takes place in the presence of glutamine and ATP through an activated phospho-Asp-tRNA(Asn) or phospho-Glu-tRNA(Gln). The polypeptide is Aspartyl/glutamyl-tRNA(Asn/Gln) amidotransferase subunit B (Pseudomonas fluorescens (strain Pf0-1)).